Here is a 183-residue protein sequence, read N- to C-terminus: Large ribosomal subunit protein eL18 (183 aa).

The tract at residues 146 to 183 (HFGPAPGVPHSHTKPYVRSKGRKFEKARGRRKSRGFRV) is disordered. Basic residues-rich tracts occupy residues 156-166 (SHTKPYVRSKG) and 173-183 (RGRRKSRGFRV).

The protein belongs to the eukaryotic ribosomal protein eL18 family.

The protein is Large ribosomal subunit protein eL18 (RPL18) of Cicer arietinum (Chickpea).